The primary structure comprises 714 residues: MTSNARNGPLPPNPLANSGNNRDISADITMAEQVVRPESQTQVENSSTKQPNGQTKPMSASNAKDPLRPRRKKAKRACFACQRAHLTCGDERPCQRCIKRGIQNSCHDGVRKKAKYLHDAPNEALMPHLQGQLYTQTNAVRNNMSLTSNGSNSKTNFYPRQNSNFNGYYATKNDGSLSQSQLHDAGRPDTFPSQSPVSPTFSITANSATSGNQNMPSSLPASNGNASGQAQNGFGSAFFDPCDPALFNFDLASMNFGNHYGALEFGMLGHMATGAGDTPPSDSATQHGSVGRNGSGTFAPGSNFGESPTAQPSFLFGDPTIAGDWSSSVHTRNIYNQNMNHMSETPHAFAIESGPANFASPNSIESPLLTNSATFDDNTTSAYQNRSSMNPMPPQRQPVVSTPQLKHLQLSKRRQRNPSAIYESVKEPYSYTTGFHSLTAFIQRRFSTQNTLRIAKALASIRPSFIATTKTLNRDDLIFMEKCFQRTLWEYEDFINACGTPTIVCRRTGEIAAVGKEFSILTGWRKEVLLGKEPNLNINTGGSSGSTSGTSSRGSFTPRAGMEVNPSGRTQPVFLAELLDDESVVEFYEDFAKLAFGDSRGSVMTTCKLLKYKTKADTDMLPGNTGGTGGGDGQSAASGNGHVKVENGMAASNGQAQPLSQPQRRWSRGGIAGEAGMNQLGFKDGKVECSYCWTVKRDVFDIPMLIVMNFLPCI.

Residues 1–71 form a disordered region; the sequence is MTSNARNGPL…NAKDPLRPRR (71 aa). The segment covering 38-62 has biased composition (polar residues); that stretch reads ESQTQVENSSTKQPNGQTKPMSASN. Positions 78–106 form a DNA-binding region, zn(2)-C6 fungal-type; the sequence is CFACQRAHLTCGDERPCQRCIKRGIQNSC. 3 disordered regions span residues 176–228, 274–312, and 539–567; these read SLSQ…NASG, GAGD…TAQP, and NTGG…VNPS. Residues 191 to 228 are compositionally biased toward polar residues; that stretch reads FPSQSPVSPTFSITANSATSGNQNMPSSLPASNGNASG. Low complexity predominate over residues 545 to 555; the sequence is GSTSGTSSRGS.

The protein belongs to the ERT1/acuK family.

It localises to the nucleus. Functionally, transcription factor which regulates nonfermentable carbon utilization. Activator of gluconeogenetic genes. In Uncinocarpus reesii (strain UAMH 1704), this protein is Transcription activator of gluconeogenesis UREG_00958.